Consider the following 213-residue polypeptide: Serine acetyltransferase (213 aa).

Belongs to the transferase hexapeptide repeat family.

The protein resides in the cytoplasm. The enzyme catalyses L-serine + acetyl-CoA = O-acetyl-L-serine + CoA. The protein operates within amino-acid biosynthesis; L-cysteine biosynthesis; L-cysteine from L-serine: step 1/2. The chain is Serine acetyltransferase (cysE) from Staphylococcus epidermidis (strain ATCC 35984 / DSM 28319 / BCRC 17069 / CCUG 31568 / BM 3577 / RP62A).